Reading from the N-terminus, the 375-residue chain is Tryptophan dimethylallyltransferase (375 aa).

Residues 83 to 84 (IL) and glutamate 92 each bind L-tryptophan. Residues arginine 103, lysine 189, and tyrosine 191 each coordinate substrate. The L-tryptophan site is built by tyrosine 193 and arginine 246. 5 residues coordinate substrate: arginine 259, lysine 261, tyrosine 263, glutamine 345, and tyrosine 347.

It belongs to the tryptophan dimethylallyltransferase family. As to quaternary structure, homodimer.

The enzyme catalyses L-tryptophan + dimethylallyl diphosphate = 4-(3-methylbut-2-enyl)-L-tryptophan + diphosphate. It functions in the pathway alkaloid biosynthesis; ergot alkaloid biosynthesis. Functionally, tryptophan dimethylallyltransferase; part of the gene cluster that mediates the biosynthesis of fungal ergot alkaloid. DmaW catalyzes the first step of ergot alkaloid biosynthesis by condensing dimethylallyl diphosphate (DMAP) and tryptophan to form 4-dimethylallyl-L-tryptophan. The second step is catalyzed by the methyltransferase easF that methylates 4-dimethylallyl-L-tryptophan in the presence of S-adenosyl-L-methionine, resulting in the formation of 4-dimethylallyl-L-abrine. The catalase easC and the FAD-dependent oxidoreductase easE then transform 4-dimethylallyl-L-abrine to chanoclavine-I which is further oxidized by easD in the presence of NAD(+), resulting in the formation of chanoclavine-I aldehyde. Chanoclavine-I aldehyde is the precursor of ergoamides and ergopeptines in Clavicipitaceae, and clavine-type alcaloids such as fumiclavine in Trichocomaceae. However, the metabolites downstream of chanoclavine-I aldehyde in Arthrodermataceae have not been identified yet. The protein is Tryptophan dimethylallyltransferase of Trichophyton verrucosum (strain HKI 0517).